A 249-amino-acid polypeptide reads, in one-letter code: Probable transcriptional regulatory protein MXAN_4974 (249 aa).

This sequence belongs to the TACO1 family.

The protein localises to the cytoplasm. The protein is Probable transcriptional regulatory protein MXAN_4974 of Myxococcus xanthus (strain DK1622).